A 350-amino-acid polypeptide reads, in one-letter code: Ketol-acid reductoisomerase (NADP(+)) (350 aa).

Residues 4 to 187 (VSITTDYSRM…GGARANIIKT (184 aa)) enclose the KARI N-terminal Rossmann domain. Residues 30 to 33 (YGSQ), Arg53, Thr58, and 88 to 91 (DMVQ) contribute to the NADP(+) site. His113 is a catalytic residue. NADP(+) is bound at residue Gly139. In terms of domain architecture, KARI C-terminal knotted spans 188 to 333 (TFKEETETDL…KQLRAKMVWL (146 aa)). Mg(2+) contacts are provided by Asp196, Glu200, Glu232, and Glu236. Ser257 is a binding site for substrate.

This sequence belongs to the ketol-acid reductoisomerase family. Requires Mg(2+) as cofactor.

It catalyses the reaction (2R)-2,3-dihydroxy-3-methylbutanoate + NADP(+) = (2S)-2-acetolactate + NADPH + H(+). The enzyme catalyses (2R,3R)-2,3-dihydroxy-3-methylpentanoate + NADP(+) = (S)-2-ethyl-2-hydroxy-3-oxobutanoate + NADPH + H(+). Its pathway is amino-acid biosynthesis; L-isoleucine biosynthesis; L-isoleucine from 2-oxobutanoate: step 2/4. It participates in amino-acid biosynthesis; L-valine biosynthesis; L-valine from pyruvate: step 2/4. Its function is as follows. Involved in the biosynthesis of branched-chain amino acids (BCAA). Catalyzes an alkyl-migration followed by a ketol-acid reduction of (S)-2-acetolactate (S2AL) to yield (R)-2,3-dihydroxy-isovalerate. In the isomerase reaction, S2AL is rearranged via a Mg-dependent methyl migration to produce 3-hydroxy-3-methyl-2-ketobutyrate (HMKB). In the reductase reaction, this 2-ketoacid undergoes a metal-dependent reduction by NADPH to yield (R)-2,3-dihydroxy-isovalerate. The sequence is that of Ketol-acid reductoisomerase (NADP(+)) from Xylella fastidiosa (strain 9a5c).